Consider the following 164-residue polypeptide: Nucleotide-binding protein Helmi_22490 (164 aa).

This sequence belongs to the YajQ family.

Functionally, nucleotide-binding protein. The chain is Nucleotide-binding protein Helmi_22490 from Heliobacterium modesticaldum (strain ATCC 51547 / Ice1).